A 60-amino-acid chain; its full sequence is Ferredoxin (60 aa).

4Fe-4S ferredoxin-type domains follow at residues 2-29 (KVRVDADACIGCGVCENLCPDVFQLGDD) and 30-60 (GKAKVLQPETDLPCAKDAADSCPTGAISVEE). [4Fe-4S] cluster-binding residues include Cys-10, Cys-13, and Cys-16. The cysteines at positions 20 and 43 are disulfide-linked. Cys-51 contributes to the [4Fe-4S] cluster binding site.

Monomer. It depends on [4Fe-4S] cluster as a cofactor.

Its function is as follows. Ferredoxins are iron-sulfur proteins that transfer electrons in a wide variety of metabolic reactions. This chain is Ferredoxin (fdx), found in Thermotoga maritima (strain ATCC 43589 / DSM 3109 / JCM 10099 / NBRC 100826 / MSB8).